The following is a 369-amino-acid chain: UDP-N-acetylglucosamine--N-acetylmuramyl-(pentapeptide) pyrophosphoryl-undecaprenol N-acetylglucosamine transferase (369 aa).

UDP-N-acetyl-alpha-D-glucosamine is bound by residues 10–12 (TGG), Asn-124, Arg-166, Ser-196, and Gln-300.

This sequence belongs to the glycosyltransferase 28 family. MurG subfamily.

It localises to the cell membrane. It carries out the reaction di-trans,octa-cis-undecaprenyl diphospho-N-acetyl-alpha-D-muramoyl-L-alanyl-D-glutamyl-meso-2,6-diaminopimeloyl-D-alanyl-D-alanine + UDP-N-acetyl-alpha-D-glucosamine = di-trans,octa-cis-undecaprenyl diphospho-[N-acetyl-alpha-D-glucosaminyl-(1-&gt;4)]-N-acetyl-alpha-D-muramoyl-L-alanyl-D-glutamyl-meso-2,6-diaminopimeloyl-D-alanyl-D-alanine + UDP + H(+). It functions in the pathway cell wall biogenesis; peptidoglycan biosynthesis. In terms of biological role, cell wall formation. Catalyzes the transfer of a GlcNAc subunit on undecaprenyl-pyrophosphoryl-MurNAc-pentapeptide (lipid intermediate I) to form undecaprenyl-pyrophosphoryl-MurNAc-(pentapeptide)GlcNAc (lipid intermediate II). The protein is UDP-N-acetylglucosamine--N-acetylmuramyl-(pentapeptide) pyrophosphoryl-undecaprenol N-acetylglucosamine transferase of Desulfitobacterium hafniense (strain DSM 10664 / DCB-2).